Reading from the N-terminus, the 166-residue chain is Large ribosomal subunit protein uL10 (166 aa).

It belongs to the universal ribosomal protein uL10 family. In terms of assembly, part of the ribosomal stalk of the 50S ribosomal subunit. The N-terminus interacts with L11 and the large rRNA to form the base of the stalk. The C-terminus forms an elongated spine to which L12 dimers bind in a sequential fashion forming a multimeric L10(L12)X complex.

In terms of biological role, forms part of the ribosomal stalk, playing a central role in the interaction of the ribosome with GTP-bound translation factors. This is Large ribosomal subunit protein uL10 from Oceanobacillus iheyensis (strain DSM 14371 / CIP 107618 / JCM 11309 / KCTC 3954 / HTE831).